The following is a 344-amino-acid chain: Ion-translocating oxidoreductase complex subunit D (344 aa).

4 helical membrane passes run 23-43 (LVLG…GAGT), 44-64 (LLNL…MLAL), 80-100 (VTAL…LTLV), and 120-140 (PFNP…LEMT). Threonine 172 is subject to FMN phosphoryl threonine. Helical transmembrane passes span 198–218 (LGGA…LFLL), 222–242 (LFTW…SLLF), 252–272 (GSPL…FIVT), 285–305 (LLFG…GGYP), and 306–326 (DGVA…DYYT).

It belongs to the NqrB/RnfD family. The complex is composed of six subunits: RnfA, RnfB, RnfC, RnfD, RnfE and RnfG. Requires FMN as cofactor.

Its subcellular location is the cell inner membrane. Its function is as follows. Part of a membrane-bound complex that couples electron transfer with translocation of ions across the membrane. The polypeptide is Ion-translocating oxidoreductase complex subunit D (Pseudomonas paraeruginosa (strain DSM 24068 / PA7) (Pseudomonas aeruginosa (strain PA7))).